The following is a 458-amino-acid chain: UDP-N-acetylmuramate--L-alanine ligase (458 aa).

Position 115–121 (115–121 (GSHGKTT)) interacts with ATP.

It belongs to the MurCDEF family.

Its subcellular location is the cytoplasm. The enzyme catalyses UDP-N-acetyl-alpha-D-muramate + L-alanine + ATP = UDP-N-acetyl-alpha-D-muramoyl-L-alanine + ADP + phosphate + H(+). Its pathway is cell wall biogenesis; peptidoglycan biosynthesis. In terms of biological role, cell wall formation. The polypeptide is UDP-N-acetylmuramate--L-alanine ligase (Anaeromyxobacter sp. (strain Fw109-5)).